The sequence spans 554 residues: MESPNLGDNRVRGESLVPDPPWDRCKEDIAVGLGGVGEDGKDLVISSERSSLLQEPTASTLSSTTATEGHKPVPCGWERVVKQRLSGKTAGKFDVYFISPQGLKFRSKRSLANYLLKNGETFLKPEDFNFTVLPKGSINPGYKHQSLAALTSLQPNETDVSKQNLKTRSKWKTDVLPLPSGTSESPESSGLSNSNSACLLLREHRDIQDVDSEKRRKSKRKVTVLKGTASQKTKQKCRKSLLESTQRNRKRASVVQKVGADRELVPQESQLNRTLCPADACARETVGLAGEEKSPSPGLDLCFIQVTSGTTNKFHSTEAAGEANREQTFLESEEIRSKGDRKGEAHLHTGVLQDGSEMPSCSQAKKHFTSETFQEDSIPRTQVEKRKTSLYFSSKYNKEALSPPRRKSFKKWTPPRSPFNLVQEILFHDPWKLLIATIFLNRTSGKMAIPVLWEFLEKYPSAEVARAADWRDVSELLKPLGLYDLRAKTIIKFSDEYLTKQWRYPIELHGIGKYGNDSYRIFCVNEWKQVHPEDHKLNKYHDWLWENHEKLSLS.

The segment at 1–23 is disordered; it reads MESPNLGDNRVRGESLVPDPPWD. The MBD domain occupies 63–135; it reads STTATEGHKP…EDFNFTVLPK (73 aa). A compositionally biased stretch (polar residues) spans 154-164; that stretch reads QPNETDVSKQN. Disordered regions lie at residues 154–195 and 209–252; these read QPNE…SNSN and DVDS…RKRA. Low complexity predominate over residues 178-195; sequence LPSGTSESPESSGLSNSN. Phosphoserine is present on residues Ser296 and Ser402. The active site involves Asp534.

In terms of assembly, interacts with MLH1.

It localises to the nucleus. In terms of biological role, mismatch-specific DNA N-glycosylase involved in DNA repair. Has thymine glycosylase activity and is specific for G:T mismatches within methylated and unmethylated CpG sites. Can also remove uracil or 5-fluorouracil in G:U mismatches. Has no lyase activity. Was first identified as methyl-CpG-binding protein. The chain is Methyl-CpG-binding domain protein 4 (Mbd4) from Mus musculus (Mouse).